Consider the following 245-residue polypeptide: 1-(5-phosphoribosyl)-5-[(5-phosphoribosylamino)methylideneamino] imidazole-4-carboxamide isomerase (245 aa).

The active-site Proton acceptor is aspartate 7. The Proton donor role is filled by aspartate 129.

The protein belongs to the HisA/HisF family.

It is found in the cytoplasm. The enzyme catalyses 1-(5-phospho-beta-D-ribosyl)-5-[(5-phospho-beta-D-ribosylamino)methylideneamino]imidazole-4-carboxamide = 5-[(5-phospho-1-deoxy-D-ribulos-1-ylimino)methylamino]-1-(5-phospho-beta-D-ribosyl)imidazole-4-carboxamide. The protein operates within amino-acid biosynthesis; L-histidine biosynthesis; L-histidine from 5-phospho-alpha-D-ribose 1-diphosphate: step 4/9. This chain is 1-(5-phosphoribosyl)-5-[(5-phosphoribosylamino)methylideneamino] imidazole-4-carboxamide isomerase, found in Pectobacterium atrosepticum (strain SCRI 1043 / ATCC BAA-672) (Erwinia carotovora subsp. atroseptica).